Reading from the N-terminus, the 667-residue chain is 1-deoxy-D-xylulose-5-phosphate synthase (667 aa).

Residues His-73 and 113 to 115 (SHA) each bind thiamine diphosphate. Residue Asp-145 coordinates Mg(2+). Thiamine diphosphate contacts are provided by residues 146-147 (GA), Asn-175, Tyr-297, and Glu-379. Asn-175 contributes to the Mg(2+) binding site.

It belongs to the transketolase family. DXPS subfamily. In terms of assembly, homodimer. Mg(2+) is required as a cofactor. It depends on thiamine diphosphate as a cofactor.

It catalyses the reaction D-glyceraldehyde 3-phosphate + pyruvate + H(+) = 1-deoxy-D-xylulose 5-phosphate + CO2. It functions in the pathway metabolic intermediate biosynthesis; 1-deoxy-D-xylulose 5-phosphate biosynthesis; 1-deoxy-D-xylulose 5-phosphate from D-glyceraldehyde 3-phosphate and pyruvate: step 1/1. In terms of biological role, catalyzes the acyloin condensation reaction between C atoms 2 and 3 of pyruvate and glyceraldehyde 3-phosphate to yield 1-deoxy-D-xylulose-5-phosphate (DXP). The sequence is that of 1-deoxy-D-xylulose-5-phosphate synthase from Kocuria rhizophila (strain ATCC 9341 / DSM 348 / NBRC 103217 / DC2201).